The primary structure comprises 347 residues: Gamma-glutamyl hydrolase 2 (347 aa).

A signal peptide spans 1 to 22 (MWSYVWLPLVALSLFKDSIIMA). A Gamma-glutamyl hydrolase domain is found at 45-341 (APDPNLNYRP…IGYDEVYIFT (297 aa)). Residue Cys155 is the Nucleophile of the active site. His268 (proton donor) is an active-site residue.

The protein belongs to the peptidase C26 family. Expressed in roots, in leaves, stems and siliques.

It localises to the vacuole. The protein resides in the secreted. It is found in the extracellular space. Its subcellular location is the cell wall. The enzyme catalyses (6S)-5,6,7,8-tetrahydrofolyl-(gamma-L-Glu)(n) + (n-1) H2O = (6S)-5,6,7,8-tetrahydrofolate + (n-1) L-glutamate. Functionally, cleaves the polyglutamate sidechains of folate polyglutamates in the vacuole. Is important for polyglutamyl tail length determination before vacuolar exit. Plays a role on folate stability and intracellular folate content. Has endopeptidase activity against 4-amino-10-methylpteroyl penta-, tetra-, tri- and di-gamma-L-glutamate substrates and is responsible for the production of folic acid, also called pteroylglutamic acid (PteGlu) from teroylpolyglutamates. The polypeptide is Gamma-glutamyl hydrolase 2 (GGH2) (Arabidopsis thaliana (Mouse-ear cress)).